Here is a 139-residue protein sequence, read N- to C-terminus: Small ribosomal subunit protein uS11 (139 aa).

Disordered regions lie at residues 1 to 33 (MPPA…AAHI) and 118 to 139 (GAIS…RRRV). Basic residues predominate over residues 14 to 23 (KGQKTRRREK).

The protein belongs to the universal ribosomal protein uS11 family. In terms of assembly, part of the 30S ribosomal subunit. Interacts with proteins S7 and S18. Binds to IF-3.

In terms of biological role, located on the platform of the 30S subunit, it bridges several disparate RNA helices of the 16S rRNA. Forms part of the Shine-Dalgarno cleft in the 70S ribosome. The polypeptide is Small ribosomal subunit protein uS11 (Mycobacterium tuberculosis (strain ATCC 25177 / H37Ra)).